The chain runs to 895 residues: Glutamate receptor 2.3 (895 aa).

The signal sequence occupies residues 1 to 23 (MRTEKLFFCILLVFFFCLEFNRG). Over 24–582 (QNNGKTLVDV…ILFMKPLSWK (559 aa)) the chain is Extracellular. Residues Asn52, Asn203, Asn266, Asn330, Asn342, Asn477, and Asn542 are each glycosylated (N-linked (GlcNAc...) asparagine). Residues 583-603 (LWLTSFISFFLVGCTVWVLEY) traverse the membrane as a helical segment. Over 604 to 610 (KRNPDFS) the chain is Cytoplasmic. Residues 611-631 (GPPRFQASTICWFAFSTMVFA) traverse the membrane as a helical segment. At 632–635 (PRER) the chain is on the cytoplasmic side. A helical membrane pass occupies residues 636–656 (VFSFWARALVIAWYFLVLVLT). Over 657-830 (QSYTASLASL…FTSRQLDIDS (174 aa)) the chain is Extracellular. The chain crosses the membrane as a helical span at residues 831-851 (FLFLFVGVLLVCVMALGNFTY). Residues 852-895 (CFLAKDQVSYLDKVEMSPCSSSQQMPVKRKTQLNMSQVHDQDSL) are Cytoplasmic-facing. Residues 873–895 (SQQMPVKRKTQLNMSQVHDQDSL) are disordered.

Belongs to the glutamate-gated ion channel (TC 1.A.10.1) family. In terms of assembly, may form heteromers. As to expression, expressed predominantly in roots.

The protein resides in the membrane. In terms of biological role, glutamate-gated receptor that probably acts as a non-selective cation channel. May be involved in light-signal transduction and calcium homeostasis via the regulation of calcium influx into cells. The polypeptide is Glutamate receptor 2.3 (GLR2.3) (Arabidopsis thaliana (Mouse-ear cress)).